We begin with the raw amino-acid sequence, 170 residues long: MNTPRIPIASHQAVMRCLRDKLQQANLTLQTDYTEPAVSYQQRGATAGTAWLQHWEIRLNPVLLQENQQTFIDEVVPHELAHLLVYARFGRVAPHGKEWRWMMENVLHVPAKRTHRFAVQSVQGKTFTYLCDCQRHELTIRRHNRVLRGETEYRCRRCGKTLRHDVKSSI.

A SprT-like domain is found at 22-163; that stretch reads LQQANLTLQT…RCRRCGKTLR (142 aa). Residue His-78 coordinates Zn(2+). Residue Glu-79 is part of the active site. Residue His-82 coordinates Zn(2+).

It belongs to the SprT family. Zn(2+) is required as a cofactor.

Its subcellular location is the cytoplasm. The protein is Protein SprT of Pectobacterium atrosepticum (strain SCRI 1043 / ATCC BAA-672) (Erwinia carotovora subsp. atroseptica).